Consider the following 216-residue polypeptide: LexA repressor (216 aa).

A DNA-binding region (H-T-H motif) is located at residues 29–49; sequence RAEIAQALGFRSPNAAEDHLK. Catalysis depends on for autocatalytic cleavage activity residues Ser-134 and Lys-171.

Belongs to the peptidase S24 family. Homodimer.

It catalyses the reaction Hydrolysis of Ala-|-Gly bond in repressor LexA.. Functionally, represses a number of genes involved in the response to DNA damage (SOS response), including recA and lexA. In the presence of single-stranded DNA, RecA interacts with LexA causing an autocatalytic cleavage which disrupts the DNA-binding part of LexA, leading to derepression of the SOS regulon and eventually DNA repair. The polypeptide is LexA repressor (Bordetella parapertussis (strain 12822 / ATCC BAA-587 / NCTC 13253)).